A 120-amino-acid polypeptide reads, in one-letter code: MSLSRQSCGRVVRVTGRASARGLIFVIQVYRHMLSPLRPASCRFVPTCSQYAVDALTEYGLLRGSWLTMIRLAKCGPWHRGGWDPIPEGLTTGRSCQTDVDGANDDWNPASKRGERESFV.

A disordered region spans residues 93 to 120 (GRSCQTDVDGANDDWNPASKRGERESFV).

It belongs to the UPF0161 family.

The protein resides in the cell membrane. Functionally, could be involved in insertion of integral membrane proteins into the membrane. The sequence is that of Putative membrane protein insertion efficiency factor from Mycobacterium bovis (strain ATCC BAA-935 / AF2122/97).